We begin with the raw amino-acid sequence, 208 residues long: Large ribosomal subunit protein uL3 (208 aa).

A disordered region spans residues Gly-116–Ala-148.

The protein belongs to the universal ribosomal protein uL3 family. In terms of assembly, part of the 50S ribosomal subunit. Forms a cluster with proteins L14 and L19.

In terms of biological role, one of the primary rRNA binding proteins, it binds directly near the 3'-end of the 23S rRNA, where it nucleates assembly of the 50S subunit. This Streptococcus agalactiae serotype Ia (strain ATCC 27591 / A909 / CDC SS700) protein is Large ribosomal subunit protein uL3.